A 172-amino-acid polypeptide reads, in one-letter code: Bcl-2-related protein A1 (172 aa).

Residues K77–G97 carry the BH1 motif. The BH2 signature appears at E132–K147.

The protein belongs to the Bcl-2 family. Interacts directly with BCL2L11/BIM and PMAIP1. Interacts directly with BAK1, BID, BMF and BBC3. Interacts with BOP. Interacts with isoform 3, isoform 4 and isoform 5 of ING4. Interacts with UBQLN4. As to expression, expressed in hemopoietic tissues, including bone marrow, spleen and thymus.

It localises to the cytoplasm. In terms of biological role, retards apoptosis induced by IL-3 deprivation. May function in the response of hemopoietic cells to external signals and in maintaining endothelial survival during infection. Can inhibit apoptosis induced by serum starvation in the mammary epithelial cell line HC11. This chain is Bcl-2-related protein A1 (Bcl2a1), found in Mus musculus (Mouse).